The chain runs to 101 residues: Small ribosomal subunit protein uS14 (101 aa).

Over residues M1 to N10 the composition is skewed to basic and acidic residues. The interval M1–K23 is disordered. The segment covering N11–K23 has biased composition (basic residues).

This sequence belongs to the universal ribosomal protein uS14 family. Part of the 30S ribosomal subunit. Contacts proteins S3 and S10.

Functionally, binds 16S rRNA, required for the assembly of 30S particles and may also be responsible for determining the conformation of the 16S rRNA at the A site. In Nitrobacter winogradskyi (strain ATCC 25391 / DSM 10237 / CIP 104748 / NCIMB 11846 / Nb-255), this protein is Small ribosomal subunit protein uS14.